A 440-amino-acid chain; its full sequence is uncharacterized protein (440 aa).

Transmembrane regions (helical) follow at residues 1–21 (MLLV…QLYR), 29–49 (TVFI…SAFE), 70–90 (LLQM…IARI), 101–121 (VGVL…GIAM), 179–199 (TSII…LSLG), 226–246 (FVIR…AATS), 258–278 (IVAS…LLFF), 343–363 (IYPA…PFSF), 366–386 (ILTL…VGGG), and 389–409 (FAAI…GLLI).

Belongs to the dicarboxylate/amino acid:cation symporter (DAACS) (TC 2.A.23) family.

Its subcellular location is the cell membrane. This is an uncharacterized protein from Haemophilus influenzae (strain ATCC 51907 / DSM 11121 / KW20 / Rd).